The sequence spans 112 residues: UPF0060 membrane protein IL2332 (112 aa).

Helical transmembrane passes span 10 to 30 (LGLF…PYLW), 36 to 56 (SAWL…LLTL), 64 to 84 (VYAA…KAVE), and 90 to 110 (TYDA…AVGW).

The protein belongs to the UPF0060 family.

Its subcellular location is the cell inner membrane. The sequence is that of UPF0060 membrane protein IL2332 from Idiomarina loihiensis (strain ATCC BAA-735 / DSM 15497 / L2-TR).